The chain runs to 194 residues: MTAGLFWIAGAYLLGSIPTGLLLGKLYGIDVRNEGSGNIGATNLYRTVGRKVGILTLTGDCLKGLLPVLLAWKLGHAEPMQAWVGLAAFCGHVFSVFLLFKGGKGVATALGVFLALAPLAVLGALAVFILLVAVWRYISLGSIMAAAVMPLIIFFRPHSPQLLIATVLIAAVVIIKHHSNISRLIAGTESKFKA.

6 helical membrane passes run 3–23 (AGLFWIAGAYLLGSIPTGLLL), 52–72 (VGILTLTGDCLKGLLPVLLAW), 80–100 (MQAWVGLAAFCGHVFSVFLLF), 112–132 (VFLALAPLAVLGALAVFILLV), 135–155 (WRYISLGSIMAAAVMPLIIFF), and 162–182 (LLIATVLIAAVVIIKHHSNIS).

The protein belongs to the PlsY family. In terms of assembly, probably interacts with PlsX.

The protein resides in the cell inner membrane. It catalyses the reaction an acyl phosphate + sn-glycerol 3-phosphate = a 1-acyl-sn-glycero-3-phosphate + phosphate. Its pathway is lipid metabolism; phospholipid metabolism. Its function is as follows. Catalyzes the transfer of an acyl group from acyl-phosphate (acyl-PO(4)) to glycerol-3-phosphate (G3P) to form lysophosphatidic acid (LPA). This enzyme utilizes acyl-phosphate as fatty acyl donor, but not acyl-CoA or acyl-ACP. The sequence is that of Glycerol-3-phosphate acyltransferase from Trichlorobacter lovleyi (strain ATCC BAA-1151 / DSM 17278 / SZ) (Geobacter lovleyi).